A 399-amino-acid chain; its full sequence is uncharacterized protein (399 aa).

Belongs to the TelA family.

This is an uncharacterized protein from Listeria monocytogenes serovar 1/2a (strain ATCC BAA-679 / EGD-e).